The following is a 93-amino-acid chain: Small ribosomal subunit protein uS19 (93 aa).

Belongs to the universal ribosomal protein uS19 family.

In terms of biological role, protein S19 forms a complex with S13 that binds strongly to the 16S ribosomal RNA. The chain is Small ribosomal subunit protein uS19 from Synechococcus sp. (strain JA-3-3Ab) (Cyanobacteria bacterium Yellowstone A-Prime).